The chain runs to 329 residues: Cardiolipin synthase (CMP-forming) (329 aa).

Residues 1–34 constitute a mitochondrion transit peptide; the sequence is MPPSVATHASLLLKAAAAAAHLHPKPFFSPRAAP. The disordered stretch occupies residues 27–55; the sequence is FFSPRAAPPRIPSAPAPPAAGGSRYRPTT. The span at 32–44 shows a compositional bias: pro residues; sequence AAPPRIPSAPAPP. 5 consecutive transmembrane segments (helical) span residues 134-154, 156-176, 194-214, 228-248, and 298-318; these read LLTL…LLIS, FYME…AAAV, FGAF…LVLL, PWLL…MSAV, and VTSG…SLVV. Over 319–329 the chain is Mitochondrial intermembrane; that stretch reads YMRKIWRILLK.

The protein belongs to the CDP-alcohol phosphatidyltransferase class-I family. Mn(2+) serves as cofactor.

It is found in the mitochondrion inner membrane. The catalysed reaction is a CDP-1,2-diacyl-sn-glycerol + a 1,2-diacyl-sn-glycero-3-phospho-(1'-sn-glycerol) = a cardiolipin + CMP + H(+). Functionally, catalyzes the synthesis of cardiolipin (CL) (diphosphatidylglycerol) by specifically transferring a phosphatidyl group from CDP-diacylglycerol to phosphatidylglycerol (PG). CL is a key phospholipid in mitochondrial membranes and plays important roles in maintaining the functional integrity and dynamics of mitochondria under both optimal and stress conditions. The polypeptide is Cardiolipin synthase (CMP-forming) (Oryza sativa subsp. japonica (Rice)).